The chain runs to 492 residues: N-succinylglutamate 5-semialdehyde dehydrogenase (492 aa).

220-225 (GSANTG) contributes to the NAD(+) binding site. Active-site residues include Glu243 and Cys277.

Belongs to the aldehyde dehydrogenase family. AstD subfamily.

The enzyme catalyses N-succinyl-L-glutamate 5-semialdehyde + NAD(+) + H2O = N-succinyl-L-glutamate + NADH + 2 H(+). It functions in the pathway amino-acid degradation; L-arginine degradation via AST pathway; L-glutamate and succinate from L-arginine: step 4/5. In terms of biological role, catalyzes the NAD-dependent reduction of succinylglutamate semialdehyde into succinylglutamate. The sequence is that of N-succinylglutamate 5-semialdehyde dehydrogenase from Escherichia coli (strain UTI89 / UPEC).